The primary structure comprises 429 residues: Argininosuccinate lyase (429 aa).

This sequence belongs to the lyase 1 family. Argininosuccinate lyase subfamily.

The protein localises to the cytoplasm. The catalysed reaction is 2-(N(omega)-L-arginino)succinate = fumarate + L-arginine. The protein operates within amino-acid biosynthesis; L-arginine biosynthesis; L-arginine from L-ornithine and carbamoyl phosphate: step 3/3. The protein is Argininosuccinate lyase of Pyrobaculum aerophilum (strain ATCC 51768 / DSM 7523 / JCM 9630 / CIP 104966 / NBRC 100827 / IM2).